Reading from the N-terminus, the 218-residue chain is Cytidylate kinase (218 aa).

Residue 10–18 coordinates ATP; that stretch reads GPAAAGKST.

It belongs to the cytidylate kinase family. Type 1 subfamily.

It localises to the cytoplasm. The enzyme catalyses CMP + ATP = CDP + ADP. It carries out the reaction dCMP + ATP = dCDP + ADP. In Staphylococcus haemolyticus (strain JCSC1435), this protein is Cytidylate kinase.